A 397-amino-acid chain; its full sequence is MLSFLSARQSGLEDPLRLRRAQSTRRVLGLELNKDRDVERIHGSGVNTLDIEPVEGRYMLSGGSDGVVVLYDLENASRQPHYTCKAVCSVGRSHPDVHKYSVETVQWYPHDTGMFTSSSFDKTLKVWDTNTLQAADVFNFEETVYSHHMSPAATKHCLVAVGTRGPKVQLCDLKSGSCSHILQGHRQEILAVSWSPRHDYILATASADSRVKLWDVRRASGCLLTLDQHNGKKSQAAESANTAHNGKVNGLCFTSDGLHLLTIGTDNRMRLWNSSSGDNTLVNYGKVCNDSRKGLQFAVSCGCSSEFVFVPHGSTIAVYAVHSGERLAMLKGHYKSVDCCVFQPNFQELYSGSRDCNILAWVPPSYEPVPDDDDEAPAKSQLNPAFADAWSSSDEDG.

5 WD repeats span residues 41 to 81, 97 to 137, 184 to 224, 243 to 282, and 332 to 371; these read IHGS…RQPH, VHKY…AADV, GHRQ…GCLL, AHNGKVNGLCFTSDGLHLLTIGTDNRMRLWNSSSGDNTLV, and GHYKSVDCCVFQPNFQELYSGSRDCNILAWVPPSYEPVPD. 3 positions are modified to phosphoserine: Ser-391, Ser-392, and Ser-393.

Part of the CSA complex (also named DCX(ERCC8) complex), a DCX E3 ubiquitin-protein ligase complex containing ERCC8, RBX1, DDB1 and CUL4A; the CSA complex interacts with RNA polymerase II; upon UV irradiation it interacts with the COP9 signalosome and preferentially with the hyperphosphorylated form of RNA polymerase II. Interacts with ERCC6/CSB (via CIM motif); promoting recruitment to lesion-stalled RNA polymerase II (Pol II). Interacts with KIAA1530/UVSSA. Interacts with a subunit of RNA polymerase II TFIIH.

It localises to the nucleus. The protein resides in the chromosome. The protein localises to the nucleus matrix. The protein operates within protein modification; protein ubiquitination. In terms of biological role, substrate-recognition component of the CSA complex, a DCX (DDB1-CUL4-X-box) E3 ubiquitin-protein ligase complex, involved in transcription-coupled nucleotide excision repair (TC-NER), a process during which RNA polymerase II-blocking lesions are rapidly removed from the transcribed strand of active genes. Following recruitment to lesion-stalled RNA polymerase II (Pol II), the CSA complex mediates ubiquitination of Pol II subunit POLR2A/RPB1 at 'Lys-1268', a critical TC-NER checkpoint, governing RNA Pol II stability and initiating DNA damage excision by TFIIH recruitment. The CSA complex also promotes the ubiquitination and subsequent proteasomal degradation of ERCC6/CSB in a UV-dependent manner; ERCC6 degradation is essential for the recovery of RNA synthesis after transcription-coupled repair. Also plays a role in DNA double-strand breaks (DSSBs) repair by non-homologous end joining (NHEJ). This Mus musculus (Mouse) protein is DNA excision repair protein ERCC-8.